The primary structure comprises 142 residues: Large ribosomal subunit protein uL11 (142 aa).

It belongs to the universal ribosomal protein uL11 family. As to quaternary structure, part of the ribosomal stalk of the 50S ribosomal subunit. Interacts with L10 and the large rRNA to form the base of the stalk. L10 forms an elongated spine to which L12 dimers bind in a sequential fashion forming a multimeric L10(L12)X complex. Post-translationally, one or more lysine residues are methylated.

Forms part of the ribosomal stalk which helps the ribosome interact with GTP-bound translation factors. The chain is Large ribosomal subunit protein uL11 from Beijerinckia indica subsp. indica (strain ATCC 9039 / DSM 1715 / NCIMB 8712).